A 584-amino-acid chain; its full sequence is Nif-specific regulatory protein (584 aa).

Residues 1–24 (MTHMPARPVDGAEPLSALPAGPMR) are disordered. Residues 45 to 187 (RLEITLANVV…MVANLVSRTI (143 aa)) enclose the GAF domain. A Sigma-54 factor interaction domain is found at 229–457 (IIGDSPALQQ…LENCVRRTAT (229 aa)). ATP is bound by residues 257–264 (GESGTGKE) and 320–329 (ANGGTLLLDE). The tract at residues 458 to 541 (LARSSSIVSS…CPAMESRLTQ (84 aa)) is inter-domain linker. Positions 471 and 476 each coordinate a divalent metal cation. The tract at residues 495-518 (GHARSNVMPTSSPRSGGSIGASDE) is disordered. The tract at residues 542–584 (RDRLIEAMEKAGWVQAKAARILGLTPRQVGYALRQHRIEVKKL) is C-terminal DNA-binding domain. Residues 556-575 (QAKAARILGLTPRQVGYALR) constitute a DNA-binding region (H-T-H motif).

Interacts with sigma-54.

Functionally, required for activation of most nif operons, which are directly involved in nitrogen fixation. In Rhizobium etli (strain ATCC 51251 / DSM 11541 / JCM 21823 / NBRC 15573 / CFN 42), this protein is Nif-specific regulatory protein (nifA).